Reading from the N-terminus, the 259-residue chain is Small ribosomal subunit protein uS7m (259 aa).

A mitochondrion-targeting transit peptide spans 1 to 39 (MLRLIKQPLFRCASSGHLMKESLVFIHQTRTFQVGKFTS). Position 157 is a phosphothreonine (Thr157).

This sequence belongs to the universal ribosomal protein uS7 family. Component of the mitochondrial small ribosomal subunit (mt-SSU). Mature yeast 74S mitochondrial ribosomes consist of a small (37S) and a large (54S) subunit. The 37S small subunit contains a 15S ribosomal RNA (15S mt-rRNA) and at least 32 different proteins. The 54S large subunit contains a 21S rRNA (21S mt-rRNA) and at least 45 different proteins.

It is found in the mitochondrion. Functionally, component of the mitochondrial ribosome (mitoribosome), a dedicated translation machinery responsible for the synthesis of mitochondrial genome-encoded proteins, including at least some of the essential transmembrane subunits of the mitochondrial respiratory chain. The mitoribosomes are attached to the mitochondrial inner membrane and translation products are cotranslationally integrated into the membrane. This chain is Small ribosomal subunit protein uS7m (rsm7), found in Schizosaccharomyces pombe (strain 972 / ATCC 24843) (Fission yeast).